Consider the following 718-residue polypeptide: Polyribonucleotide nucleotidyltransferase (718 aa).

The Mg(2+) site is built by D487 and D493. Residues 554 to 613 (PRIETFKIPTDKIREVIGTGGKVIREIVEKTGAKVNIEDDGTVKVASSDGESIKAAIKWI) form the KH domain. The region spanning 623 to 691 (GEIYEGTVVK…DRGKTRLSMR (69 aa)) is the S1 motif domain. The interval 694 to 718 (DQETGEDLEAKQKAEGEAPAQATGE) is disordered.

It belongs to the polyribonucleotide nucleotidyltransferase family. Mg(2+) is required as a cofactor.

It is found in the cytoplasm. The catalysed reaction is RNA(n+1) + phosphate = RNA(n) + a ribonucleoside 5'-diphosphate. Functionally, involved in mRNA degradation. Catalyzes the phosphorolysis of single-stranded polyribonucleotides processively in the 3'- to 5'-direction. In Rhodopseudomonas palustris (strain HaA2), this protein is Polyribonucleotide nucleotidyltransferase.